The primary structure comprises 82 residues: Cell division topological specificity factor (82 aa).

This sequence belongs to the MinE family.

Prevents the cell division inhibition by proteins MinC and MinD at internal division sites while permitting inhibition at polar sites. This ensures cell division at the proper site by restricting the formation of a division septum at the midpoint of the long axis of the cell. This Buchnera aphidicola subsp. Cinara cedri (strain Cc) protein is Cell division topological specificity factor.